Consider the following 144-residue polypeptide: AP-4 complex subunit sigma-1 (144 aa).

The protein belongs to the adaptor complexes small subunit family. As to quaternary structure, adaptor protein complex 4 (AP-4) is a heterotetramer composed of two large adaptins (epsilon-type subunit AP4E1 and beta-type subunit AP4B1), a medium adaptin (mu-type subunit AP4M1) and a small adaptin (sigma-type AP4S1).

It is found in the golgi apparatus. The protein resides in the trans-Golgi network membrane. Component of the adaptor protein complex 4 (AP-4). Adaptor protein complexes are vesicle coat components involved both in vesicle formation and cargo selection. They control the vesicular transport of proteins in different trafficking pathways. AP-4 forms a non clathrin-associated coat on vesicles departing the trans-Golgi network (TGN) and may be involved in the targeting of proteins from the trans-Golgi network (TGN) to the endosomal-lysosomal system. It is also involved in protein sorting to the basolateral membrane in epithelial cells and the proper asymmetric localization of somatodendritic proteins in neurons. AP-4 is involved in the recognition and binding of tyrosine-based sorting signals found in the cytoplasmic part of cargos, but may also recognize other types of sorting signal. In Mus musculus (Mouse), this protein is AP-4 complex subunit sigma-1.